We begin with the raw amino-acid sequence, 161 residues long: Low molecular weight phosphotyrosine protein phosphatase (161 aa).

The active-site Nucleophile is cysteine 14. Residue arginine 20 is the Transition state stabilizer of the active site. Position 57 is a phosphoserine (serine 57). Aspartate 133 functions as the Proton donor in the catalytic mechanism.

It belongs to the low molecular weight phosphotyrosine protein phosphatase family.

Its subcellular location is the cytoplasm. It catalyses the reaction O-phospho-L-tyrosyl-[protein] + H2O = L-tyrosyl-[protein] + phosphate. The enzyme catalyses a phosphate monoester + H2O = an alcohol + phosphate. Acts on tyrosine phosphorylated proteins, low-MW aryl phosphates and natural and synthetic acyl phosphates. The polypeptide is Low molecular weight phosphotyrosine protein phosphatase (Saccharomyces cerevisiae (strain ATCC 204508 / S288c) (Baker's yeast)).